Here is a 240-residue protein sequence, read N- to C-terminus: Adenosylcobinamide-GDP ribazoletransferase (240 aa).

5 consecutive transmembrane segments (helical) span residues 31 to 51 (LLYY…ASHL), 62 to 81 (ALLL…DGLA), 109 to 129 (IAVV…WVLV), 133 to 153 (IGAQ…GLFL), and 179 to 199 (VLLV…LLAL).

The protein belongs to the CobS family. Mg(2+) serves as cofactor.

It localises to the cell inner membrane. It carries out the reaction alpha-ribazole + adenosylcob(III)inamide-GDP = adenosylcob(III)alamin + GMP + H(+). The catalysed reaction is alpha-ribazole 5'-phosphate + adenosylcob(III)inamide-GDP = adenosylcob(III)alamin 5'-phosphate + GMP + H(+). It participates in cofactor biosynthesis; adenosylcobalamin biosynthesis; adenosylcobalamin from cob(II)yrinate a,c-diamide: step 7/7. Its function is as follows. Joins adenosylcobinamide-GDP and alpha-ribazole to generate adenosylcobalamin (Ado-cobalamin). Also synthesizes adenosylcobalamin 5'-phosphate from adenosylcobinamide-GDP and alpha-ribazole 5'-phosphate. This is Adenosylcobinamide-GDP ribazoletransferase from Pseudomonas putida (strain ATCC 700007 / DSM 6899 / JCM 31910 / BCRC 17059 / LMG 24140 / F1).